The sequence spans 257 residues: Deoxyribose-phosphate aldolase (257 aa).

Residue Asp-102 is the Proton donor/acceptor of the active site. Lys-165 functions as the Schiff-base intermediate with acetaldehyde in the catalytic mechanism. The active-site Proton donor/acceptor is the Lys-199.

Belongs to the DeoC/FbaB aldolase family. DeoC type 2 subfamily.

Its subcellular location is the cytoplasm. The catalysed reaction is 2-deoxy-D-ribose 5-phosphate = D-glyceraldehyde 3-phosphate + acetaldehyde. It participates in carbohydrate degradation; 2-deoxy-D-ribose 1-phosphate degradation; D-glyceraldehyde 3-phosphate and acetaldehyde from 2-deoxy-alpha-D-ribose 1-phosphate: step 2/2. Its function is as follows. Catalyzes a reversible aldol reaction between acetaldehyde and D-glyceraldehyde 3-phosphate to generate 2-deoxy-D-ribose 5-phosphate. The sequence is that of Deoxyribose-phosphate aldolase from Photobacterium profundum (strain SS9).